Here is a 158-residue protein sequence, read N- to C-terminus: Endoribonuclease YbeY (158 aa).

Histidine 118, histidine 122, and histidine 128 together coordinate Zn(2+).

This sequence belongs to the endoribonuclease YbeY family. Zn(2+) is required as a cofactor.

The protein resides in the cytoplasm. Functionally, single strand-specific metallo-endoribonuclease involved in late-stage 70S ribosome quality control and in maturation of the 3' terminus of the 16S rRNA. The polypeptide is Endoribonuclease YbeY (Bartonella bacilliformis (strain ATCC 35685 / KC583 / Herrer 020/F12,63)).